A 288-amino-acid polypeptide reads, in one-letter code: HTH-type transcriptional regulator CzcR (288 aa).

Residues 1 to 58 (MELRDLQIFQSVADQGSVSSAAKELNYVQSNVTARIKQLENELKTPLFYRHKRGMTLT) enclose the HTH lysR-type domain. The H-T-H motif DNA-binding region spans 18–37 (VSSAAKELNYVQSNVTARIK).

Belongs to the LysR transcriptional regulatory family.

The protein is HTH-type transcriptional regulator CzcR (czcR) of Bacillus cereus (strain ATCC 10987 / NRS 248).